We begin with the raw amino-acid sequence, 45 residues long: Thymosin beta-15A homolog (45 aa).

A disordered region spans residues 19–45 (KKTNTEEKNTLPSKETIEQEKECVKSS). Residues 21 to 45 (TNTEEKNTLPSKETIEQEKECVKSS) show a composition bias toward basic and acidic residues.

This sequence belongs to the thymosin beta family.

It is found in the cytoplasm. The protein resides in the cytoskeleton. Its function is as follows. Plays an important role in the organization of the cytoskeleton. Binds to and sequesters actin monomers (G actin) and therefore inhibits actin polymerization. The sequence is that of Thymosin beta-15A homolog from Coturnix japonica (Japanese quail).